We begin with the raw amino-acid sequence, 102 residues long: Large ribosomal subunit protein uL24 (102 aa).

It belongs to the universal ribosomal protein uL24 family. Part of the 50S ribosomal subunit.

Its function is as follows. One of two assembly initiator proteins, it binds directly to the 5'-end of the 23S rRNA, where it nucleates assembly of the 50S subunit. Functionally, one of the proteins that surrounds the polypeptide exit tunnel on the outside of the subunit. The protein is Large ribosomal subunit protein uL24 of Leuconostoc citreum (strain KM20).